The chain runs to 571 residues: Phototropic-responsive NPH3 family protein NPY1 (571 aa).

One can recognise a BTB domain in the interval 29-97; the sequence is SDVTIHVGEV…CYGMTVTLNA (69 aa). The NPH3 domain occupies 210 to 468; it reads DWWVEDVCEL…VQVLYFEQLR (259 aa). At Tyr409 the chain carries Phosphotyrosine. The disordered stretch occupies residues 475-571; that stretch reads ASVAASSHSP…SSRRRRHSIS (97 aa). Basic and acidic residues predominate over residues 484–504; the sequence is PVEKTEENKGEEATKKVELSK. Residues 540–562 show a composition bias toward low complexity; the sequence is SNKSSEVSSGSSQSPPAKSSSSS.

It belongs to the NPH3 family. In terms of assembly, component of a complex made of PINs (e.g. PIN1 and PIN2), MAB4/MELs (e.g. NPY1/MAB4 and NPY5/MEL1) and AGC kinases (e.g. D6PK and PID) at the plasma membrane. Binds directly to PIN2 and PID. Accumulates in organ primordia such as cotyledons, leaves and floral organs. Expressed mainly in the apical regions of embryos including cotyledon tips and the apical meristem. Induced by the transcription factor ARF5/MP at the periphery of inflorescence meristems. Highly expressed in primary root tips and radicles.

Its subcellular location is the late endosome. It localises to the cell membrane. It is found in the cytoplasm. The protein localises to the cytosol. Its pathway is protein modification; protein ubiquitination. Functionally, may act as a substrate-specific adapter of an E3 ubiquitin-protein ligase complex (CUL3-RBX1-BTB) which mediates the ubiquitination and subsequent proteasomal degradation of target proteins. Coregulates with PID the auxin-mediated plant organogenesis. Regulates basipetal PIN proteins (e.g. PIN1) polarization to establish inward auxin transport from the L1 surface of incipient organ primordia; this process is essential for the progression of flower organs development. Recruited to the plasma membrane by PINs (e.g. PIN1 and PIN2) and, in concert with AGC kinases-mediated (e.g. D6PK and PID) PINs phosphorylation, maintains their cell polarity (apical or basal) through limiting lateral diffusion-based escape. Induces auxin response in inner cell layers through a shift in PIN1 localization. Influences cotyledon development by regulating auxin distribution mainly in the protodermal cell layer. May play an essential role in root gravitropic responses. The polypeptide is Phototropic-responsive NPH3 family protein NPY1 (Arabidopsis thaliana (Mouse-ear cress)).